The chain runs to 392 residues: S-adenosylmethionine decarboxylase proenzyme (392 aa).

Active-site residues include glutamate 43 and glutamate 46. Residue serine 100 is the Schiff-base intermediate with substrate; via pyruvic acid of the active site. Serine 100 is modified (pyruvic acid (Ser); by autocatalysis). Catalysis depends on cysteine 114, which acts as the Proton donor; for catalytic activity. Residues serine 264 and histidine 277 each act as proton acceptor; for processing activity in the active site.

Belongs to the eukaryotic AdoMetDC family. It depends on pyruvate as a cofactor. In terms of processing, is synthesized initially as an inactive proenzyme. Formation of the active enzyme involves a self-maturation process in which the active site pyruvoyl group is generated from an internal serine residue via an autocatalytic post-translational modification. Two non-identical subunits are generated from the proenzyme in this reaction, and the pyruvate is formed at the N-terminus of the alpha chain, which is derived from the carboxyl end of the proenzyme. The post-translation cleavage follows an unusual pathway, termed non-hydrolytic serinolysis, in which the side chain hydroxyl group of the serine supplies its oxygen atom to form the C-terminus of the beta chain, while the remainder of the serine residue undergoes an oxidative deamination to produce ammonia and the pyruvoyl group blocking the N-terminus of the alpha chain.

It catalyses the reaction S-adenosyl-L-methionine + H(+) = S-adenosyl 3-(methylsulfanyl)propylamine + CO2. It functions in the pathway amine and polyamine biosynthesis; S-adenosylmethioninamine biosynthesis; S-adenosylmethioninamine from S-adenosyl-L-methionine: step 1/1. This chain is S-adenosylmethionine decarboxylase proenzyme, found in Leishmania infantum.